We begin with the raw amino-acid sequence, 330 residues long: 2-alkyl-3-oxoalkanoate reductase (330 aa).

The Proton acceptor role is filled by Tyr-139. Residue Lys-143 coordinates NADP(+).

Belongs to the 3-beta-HSD family. As to quaternary structure, homodimer.

The enzyme catalyses a (2R,3S)-2-alkyl-3-hydroxyalkanoate + NADP(+) = an (R)-2-alkyl-3-oxoalkanoate + NADPH + H(+). In terms of biological role, involved in olefin biosynthesis. Catalyzes the reversible stereospecific NADPH-dependent reduction of 2-alkyl-3-oxoalkanoic acids to 2-alkyl-3-hydroxyalkanoic acids. In the oxidative direction, syn-2-decyl-3-hydroxytetradecanoic acid is the preferred substrate. In the reductive direction, (2R/S)-2-hexyl-3-ketodecanoic acid is accepted as substrate. The protein is 2-alkyl-3-oxoalkanoate reductase of Stenotrophomonas maltophilia (strain K279a).